A 311-amino-acid chain; its full sequence is Phosphopantothenate--cysteine ligase (311 aa).

An N-acetylalanine modification is found at A2.

This sequence belongs to the PPC synthetase family. As to quaternary structure, homodimer.

It catalyses the reaction (R)-4'-phosphopantothenate + L-cysteine + ATP = N-[(R)-4-phosphopantothenoyl]-L-cysteine + AMP + diphosphate + H(+). It carries out the reaction (R)-4'-phosphopantothenate + L-cysteine + CTP = N-[(R)-4-phosphopantothenoyl]-L-cysteine + CMP + diphosphate + H(+). It functions in the pathway cofactor biosynthesis; coenzyme A biosynthesis; CoA from (R)-pantothenate: step 2/5. Catalyzes the second step in the biosynthesis of coenzyme A from vitamin B5, where cysteine is conjugated to 4'-phosphopantothenate to form 4-phosphopantothenoylcysteine. Has a preference for ATP over CTP as a cosubstrate. The sequence is that of Phosphopantothenate--cysteine ligase (PPCS) from Homo sapiens (Human).